Here is a 197-residue protein sequence, read N- to C-terminus: Shikimate kinase (197 aa).

15–20 is a binding site for ATP; it reads GSGKSS. Ser-19 lines the Mg(2+) pocket. Substrate is bound by residues Asp-37, Arg-61, and Gly-83. Arg-121 provides a ligand contact to ATP. Position 148 (Arg-148) interacts with substrate.

This sequence belongs to the shikimate kinase family. In terms of assembly, monomer. Requires Mg(2+) as cofactor.

The protein localises to the cytoplasm. The enzyme catalyses shikimate + ATP = 3-phosphoshikimate + ADP + H(+). The protein operates within metabolic intermediate biosynthesis; chorismate biosynthesis; chorismate from D-erythrose 4-phosphate and phosphoenolpyruvate: step 5/7. In terms of biological role, catalyzes the specific phosphorylation of the 3-hydroxyl group of shikimic acid using ATP as a cosubstrate. In Chlorobium phaeovibrioides (strain DSM 265 / 1930) (Prosthecochloris vibrioformis (strain DSM 265)), this protein is Shikimate kinase.